Reading from the N-terminus, the 340-residue chain is L-threonine 3-dehydrogenase (340 aa).

Cys38 is a binding site for Zn(2+). Catalysis depends on charge relay system residues Thr40 and His43. Zn(2+) contacts are provided by His63, Glu64, Cys93, Cys96, Cys99, and Cys107. Residues Ile175, Asp195, Arg200, 261-263 (LGI), and 285-286 (IY) contribute to the NAD(+) site.

It belongs to the zinc-containing alcohol dehydrogenase family. Homotetramer. The cofactor is Zn(2+).

It is found in the cytoplasm. The catalysed reaction is L-threonine + NAD(+) = (2S)-2-amino-3-oxobutanoate + NADH + H(+). The protein operates within amino-acid degradation; L-threonine degradation via oxydo-reductase pathway; glycine from L-threonine: step 1/2. Catalyzes the NAD(+)-dependent oxidation of L-threonine to 2-amino-3-ketobutyrate. The polypeptide is L-threonine 3-dehydrogenase (Stenotrophomonas maltophilia (strain K279a)).